A 269-amino-acid polypeptide reads, in one-letter code: Tryptophan synthase alpha chain (269 aa).

Catalysis depends on proton acceptor residues Glu-49 and Asp-60.

The protein belongs to the TrpA family. In terms of assembly, tetramer of two alpha and two beta chains.

It carries out the reaction (1S,2R)-1-C-(indol-3-yl)glycerol 3-phosphate + L-serine = D-glyceraldehyde 3-phosphate + L-tryptophan + H2O. It functions in the pathway amino-acid biosynthesis; L-tryptophan biosynthesis; L-tryptophan from chorismate: step 5/5. In terms of biological role, the alpha subunit is responsible for the aldol cleavage of indoleglycerol phosphate to indole and glyceraldehyde 3-phosphate. In Pseudomonas entomophila (strain L48), this protein is Tryptophan synthase alpha chain.